The following is a 519-amino-acid chain: Zinc finger protein 692 (519 aa).

The interval glycine 123–isoleucine 314 is disordered. The span at arginine 145–glutamine 155 shows a compositional bias: polar residues. Position 162 is a phosphoserine (serine 162). The span at histidine 164 to leucine 173 shows a compositional bias: basic and acidic residues. Over residues valine 177–proline 187 the composition is skewed to pro residues. Acidic residues predominate over residues glycine 188–leucine 206. Serine 231 carries the post-translational modification Phosphoserine. Over residues alanine 247 to arginine 266 the composition is skewed to low complexity. A compositionally biased stretch (polar residues) spans proline 277–proline 303. 5 C2H2-type zinc fingers span residues methionine 328–histidine 353, phenylalanine 359–histidine 383, tyrosine 389–histidine 411, leucine 417–histidine 439, and phenylalanine 448–histidine 471. The disordered stretch occupies residues lysine 469–glutamine 519. At serine 470 the chain carries Phosphoserine; by AMPK. A compositionally biased stretch (polar residues) spans serine 501 to glutamine 519.

This sequence belongs to the krueppel C2H2-type zinc-finger protein family. Post-translationally, phosphorylation at Ser-470 results in loss of DNA-binding activity. In terms of tissue distribution, ubiquitous. Highly expressed in brain, thymus and spleen.

It localises to the nucleus. May act as an transcriptional repressor for PCK1 gene expression, in turn may participate in the hepatic gluconeogenesis regulation through the activated AMPK signaling pathway. In Homo sapiens (Human), this protein is Zinc finger protein 692 (ZNF692).